Consider the following 616-residue polypeptide: Protein NRT1/ PTR FAMILY 2.11 (616 aa).

Positions 1-22 (MERKPLELESTDNHQNPSSAVY) are disordered. 12 helical membrane passes run 59-79 (FEKL…TAVF), 87-107 (ATII…AAFL), 118-138 (LSVA…TAAV), 159-179 (GGQI…AGGI), 205-225 (FFNW…TLVV), 233-253 (WTIG…IFFA), 349-369 (VKCI…YLTI), 392-412 (FVIP…VFIV), 435-455 (LQRI…AGFV), 483-503 (AMWL…AAIG), 519-539 (FAGS…SFLI), and 566-586 (LFYF…LVMS).

Belongs to the major facilitator superfamily. Proton-dependent oligopeptide transporter (POT/PTR) (TC 2.A.17) family. As to expression, expressed in roots. Detected in shoots, stems and flowers. Expressed in veins and in the root vasculature with highest expression in lateral branching points.

It localises to the cell membrane. Its function is as follows. High-affinity, proton-dependent glucosinolate-specific transporter. Involved in apoplasmic phloem-loading of glucosinolates and in bidirectional long-distance transport of aliphatic but not indole glucosinolates. May be involved in removal of glucosinolates from the xylem in roots. The polypeptide is Protein NRT1/ PTR FAMILY 2.11 (NPF2.11) (Arabidopsis thaliana (Mouse-ear cress)).